Reading from the N-terminus, the 92-residue chain is Small ribosomal subunit protein uS19 (92 aa).

It belongs to the universal ribosomal protein uS19 family.

In terms of biological role, protein S19 forms a complex with S13 that binds strongly to the 16S ribosomal RNA. The chain is Small ribosomal subunit protein uS19 from Chelativorans sp. (strain BNC1).